The following is an 85-amino-acid chain: Photosystem I reaction center subunit PsaK (85 aa).

Helical transmembrane passes span 12–34 (TVTW…IAVG) and 54–76 (GGMG…IGAI).

It belongs to the PsaG/PsaK family.

The protein localises to the cellular thylakoid membrane. The protein is Photosystem I reaction center subunit PsaK of Parasynechococcus marenigrum (strain WH8102).